Here is a 318-residue protein sequence, read N- to C-terminus: (1S)-1,7-diacetoxy-luvungin A aldo-keto reductase (318 aa).

Catalysis depends on Y54, which acts as the Proton donor.

This sequence belongs to the aldo/keto reductase family. As to expression, expressed in flowers, maturing fruits and in juice vesicles.

It carries out the reaction (1S)-1,7-diacetoxy-luvungin A + AH2 + H2O = (1R,2R,3S,8R,10R,11R,15S,16S)-3-(acetyloxy)-15-[(4R)-4-[(2S)-3,3-dimethyloxiran-2-yl]-1,4-dihydroxybutan-2-yl]-2,7,7,11,16-pentamethyl-5-oxo-6-oxatetracyclo[9.7.0.0(2,8).0(12,16)]octadec-12-en-10-yl acetate + acetate + A + H(+). Its pathway is secondary metabolite biosynthesis; terpenoid biosynthesis. In terms of biological role, aldo-keto reductase involved in the biosynthesis of limonoids triterpene natural products such as limonin, a compound with insecticidal activity responsible for the bitter taste in citrus. Can use (1S)-1,7-diacetoxy-luvungin A as substrate. This is (1S)-1,7-diacetoxy-luvungin A aldo-keto reductase from Citrus sinensis (Sweet orange).